A 102-amino-acid chain; its full sequence is RNA-binding protein Hfq (102 aa).

The region spanning 9-68 is the Sm domain; that stretch reads DPFLNALRRERVPVSIYLVNGIKLQGQIESFDQFVILLKNTVSQMVYKHAISTVVPSRPV. Positions 63-102 are disordered; the sequence is VPSRPVSHHSNNTGGGSNNYHHGSSPAPSSQPQQDSADAE. The segment covering 70–102 has biased composition (low complexity); that stretch reads HHSNNTGGGSNNYHHGSSPAPSSQPQQDSADAE.

Belongs to the Hfq family. Homohexamer.

Functionally, RNA chaperone that binds small regulatory RNA (sRNAs) and mRNAs to facilitate mRNA translational regulation in response to envelope stress, environmental stress and changes in metabolite concentrations. Also binds with high specificity to tRNAs. The protein is RNA-binding protein Hfq of Erwinia tasmaniensis (strain DSM 17950 / CFBP 7177 / CIP 109463 / NCPPB 4357 / Et1/99).